The primary structure comprises 195 residues: Imidazoleglycerol-phosphate dehydratase (195 aa).

The protein belongs to the imidazoleglycerol-phosphate dehydratase family.

The protein localises to the cytoplasm. It catalyses the reaction D-erythro-1-(imidazol-4-yl)glycerol 3-phosphate = 3-(imidazol-4-yl)-2-oxopropyl phosphate + H2O. It functions in the pathway amino-acid biosynthesis; L-histidine biosynthesis; L-histidine from 5-phospho-alpha-D-ribose 1-diphosphate: step 6/9. The sequence is that of Imidazoleglycerol-phosphate dehydratase from Cupriavidus taiwanensis (strain DSM 17343 / BCRC 17206 / CCUG 44338 / CIP 107171 / LMG 19424 / R1) (Ralstonia taiwanensis (strain LMG 19424)).